Consider the following 126-residue polypeptide: Holo-[acyl-carrier-protein] synthase (126 aa).

Mg(2+) contacts are provided by aspartate 8 and glutamate 60.

Belongs to the P-Pant transferase superfamily. AcpS family. Mg(2+) is required as a cofactor.

The protein localises to the cytoplasm. It carries out the reaction apo-[ACP] + CoA = holo-[ACP] + adenosine 3',5'-bisphosphate + H(+). Its function is as follows. Transfers the 4'-phosphopantetheine moiety from coenzyme A to a Ser of acyl-carrier-protein. This Ehrlichia canis (strain Jake) protein is Holo-[acyl-carrier-protein] synthase.